Here is a 105-residue protein sequence, read N- to C-terminus: UPF0235 protein A1E_05380 (105 aa).

It belongs to the UPF0235 family.

The polypeptide is UPF0235 protein A1E_05380 (Rickettsia canadensis (strain McKiel)).